The sequence spans 170 residues: Gas vesicle protein A2 (170 aa).

The disordered stretch occupies residues 86–170 (SPMAKTVGRA…PRRRTEEEDR (85 aa)). 2 stretches are compositionally biased toward basic and acidic residues: residues 104 to 119 (LTDK…HEHE) and 127 to 137 (DRPRAGAERGR). The span at 138–148 (STQRPRSRPAA) shows a compositional bias: basic residues. Positions 149–170 (RPRDEDDRPRSRPRRRTEEEDR) are enriched in basic and acidic residues.

It belongs to the gas vesicle GvpA family. As to quaternary structure, the gas vesicle shell is 2 nm thick and consists of a single layer of this protein. It forms helical ribs nearly perpendicular to the long axis of the vesicle.

Its subcellular location is the gas vesicle shell. In terms of biological role, gas vesicles are hollow, gas filled proteinaceous nanostructures found in some microorganisms. During planktonic growth they allow positioning of the organism at a favorable depth for light or nutrient acquisition. GvpA forms the protein shell. It is not clear what function GVs perform in soil bacteria. This chain is Gas vesicle protein A2, found in Streptomyces coelicolor (strain ATCC BAA-471 / A3(2) / M145).